Consider the following 474-residue polypeptide: Nitric oxide reductase subunit B (474 aa).

The helical transmembrane segment at Tyr-19–Leu-39 threads the bilayer. His-60 lines the heme b pocket. The next 8 helical transmembrane spans lie at Thr-61–Pro-81, Ile-95–Val-115, Ile-145–Gly-165, Val-169–Phe-189, His-207–Ile-227, Val-243–Ile-263, Leu-270–Phe-290, and Ser-308–Met-328. Fe cation-binding residues include His-207, His-258, and His-259. Positions 347 and 349 each coordinate heme b. Helical transmembrane passes span Gly-348–Met-368, Phe-390–Val-410, and Leu-433–Cys-453.

It belongs to the heme-copper respiratory oxidase family. In terms of assembly, heterodimer of cytochromes b (large subunit) and c (small subunit).

Its subcellular location is the cell membrane. The catalysed reaction is nitrous oxide + 2 Fe(III)-[cytochrome c] + H2O = 2 nitric oxide + 2 Fe(II)-[cytochrome c] + 2 H(+). Its pathway is nitrogen metabolism; nitrate reduction (denitrification); dinitrogen from nitrate: step 3/4. Its function is as follows. Component of the anaerobic respiratory chain that transforms nitrate to dinitrogen (denitrification). NorB is the catalytic subunit of the enzyme complex. Shows proton pump activity across the membrane in denitrifying bacterial cells. The mononitrogen reduction is probably coupled to electron transport phosphorylation. The chain is Nitric oxide reductase subunit B (norB) from Stutzerimonas stutzeri (Pseudomonas stutzeri).